The primary structure comprises 236 residues: Chorionic somatomammotropin hormone 1 (236 aa).

Positions 1 to 36 (MAPASSHRGHQWICDLVRGSCLLLLLVVSNLLLCQG) are cleaved as a signal peptide. Residue asparagine 89 is glycosylated (N-linked (GlcNAc...) asparagine). Disulfide bonds link cysteine 98–cysteine 214 and cysteine 231–cysteine 236.

The protein belongs to the somatotropin/prolactin family.

It localises to the secreted. The chain is Chorionic somatomammotropin hormone 1 (CSH1) from Bos taurus (Bovine).